The primary structure comprises 898 residues: Fasciclin-2 (898 aa).

The N-terminal stretch at 1-22 is a signal peptide; that stretch reads MRTVACAVLLACFMGCLAGAWA. The Extracellular segment spans residues 23–764; sequence QSAGLEILPN…EDGSEGQMSS (742 aa). Ig-like C2-type domains lie at 31–124, 134–219, 226–316, 321–423, and 428–525; these read PNSE…KQLS, PITW…RPIR, PQMS…VEVT, PRIG…GHLM, and PSFA…IMLR. N-linked (GlcNAc...) asparagine glycosylation is found at asparagine 35, asparagine 51, asparagine 149, asparagine 192, asparagine 297, and asparagine 328. Residues cysteine 48 and cysteine 113 are joined by a disulfide bond. Disulfide bonds link cysteine 156–cysteine 203 and cysteine 248–cysteine 300. Cysteine 343 and cysteine 407 form a disulfide bridge. N-linked (GlcNAc...) asparagine glycans are attached at residues asparagine 447, asparagine 457, and asparagine 580. Cysteine 450 and cysteine 509 are disulfide-bonded. Fibronectin type-III domains lie at 532–626 and 644–745; these read AVLQ…TPRI and GTEN…VKDP. The chain crosses the membrane as a helical span at residues 765–782; the sequence is AAIVVLVVAALLLALLVV. Over 783-898 the chain is Cytoplasmic; that stretch reads DLVCCLVWRG…TSFVGKDSAV (116 aa).

It is found in the membrane. Functionally, neuronal recognition molecule. Involved in a pathway recognition for axons during the development of nerve fascicles. This is Fasciclin-2 (FAS2) from Schistocerca americana (American grasshopper).